The primary structure comprises 692 residues: E3 ubiquitin-protein ligase MARCHF7 (692 aa).

At Met1 the chain carries N-acetylmethionine. Disordered regions lie at residues 1–165 (MESK…SHRS), 201–280 (STNH…GRRT), 296–343 (FFSR…RASE), 360–425 (LSQN…HLFR), 440–474 (SLGA…RNTG), and 512–532 (SSAD…PEKL). Residues 37-48 (YHSRDSSFRLDS) show a composition bias toward basic and acidic residues. Composition is skewed to polar residues over residues 61-83 (PYQS…SQNQ) and 95-132 (SCTN…SSMV). The segment covering 140-153 (LMRERRDLERRRDS) has biased composition (basic and acidic residues). The span at 201-214 (STNHQLPSEHQTVP) shows a compositional bias: polar residues. Over residues 215 to 233 (SSRDSSRSSFRSHFSPRQS) the composition is skewed to low complexity. The span at 235-272 (SFRNSSHPAFSYLSSRNETPTISSSERAGSSQRPFQES) shows a compositional bias: polar residues. Residues 296 to 305 (FFSRRSSQDS) are compositionally biased toward low complexity. The span at 306–336 (LNTRSLSSENYISPRTLTSQSRNNGASSSEV) shows a compositional bias: polar residues. Phosphoserine is present on residues Ser318 and Ser389. The segment covering 450–462 (ASGASGNASASGS) has biased composition (low complexity). Over residues 516–532 (GKSEKAKSAPSRDPEKL) the composition is skewed to basic and acidic residues. An RING-CH-type zinc finger spans residues 545–615 (DEEEEGDLCR…ELCKEKLQLN (71 aa)). Residues Cys553, Cys556, Cys571, Cys573, His581, Cys584, Cys605, and Cys608 each coordinate Zn(2+). Phosphothreonine is present on Thr687. Ser688 bears the Phosphoserine mark.

Its subcellular location is the cytoplasm. The catalysed reaction is S-ubiquitinyl-[E2 ubiquitin-conjugating enzyme]-L-cysteine + [acceptor protein]-L-lysine = [E2 ubiquitin-conjugating enzyme]-L-cysteine + N(6)-ubiquitinyl-[acceptor protein]-L-lysine.. It participates in protein modification; protein ubiquitination. In terms of biological role, E3 ubiquitin-protein ligase which may specifically enhance the E2 activity of HIP2. E3 ubiquitin ligases accept ubiquitin from an E2 ubiquitin-conjugating enzyme in the form of a thioester and then directly transfer the ubiquitin to targeted substrates. May be involved in T-cell proliferation by regulating LIF secretion. May play a role in lysosome homeostasis. Promotes 'Lys-6', 'Lys-11' and 'Lys-63'-linked mixed polyubiquitination on ATG14 leading to the inhibition of autophagy by impairing the interaction between ATG14 and STX7. Participates in the dopamine-mediated negative regulation of the NLRP3 inflammasome by promoting its uibiquitination and subsequent degradation. The polypeptide is E3 ubiquitin-protein ligase MARCHF7 (Marchf7) (Rattus norvegicus (Rat)).